A 602-amino-acid chain; its full sequence is Type 2 DNA topoisomerase 6 subunit B (602 aa).

ATP contacts are provided by residues asparagine 40, aspartate 71, serine 92–arginine 93, glycine 102–serine 109, and lysine 425.

The protein belongs to the TOP6B family. In terms of assembly, homodimer. Heterotetramer of two Top6A and two Top6B chains.

It carries out the reaction ATP-dependent breakage, passage and rejoining of double-stranded DNA.. Functionally, relaxes both positive and negative superturns and exhibits a strong decatenase activity. This is Type 2 DNA topoisomerase 6 subunit B from Archaeoglobus fulgidus (strain ATCC 49558 / DSM 4304 / JCM 9628 / NBRC 100126 / VC-16).